The sequence spans 240 residues: Histidinol dehydrogenase homolog oryD (240 aa).

Q64 and H67 together coordinate Zn(2+). E134 serves as the catalytic Proton acceptor. Residues D168 and H228 each coordinate Zn(2+).

This sequence belongs to the histidinol dehydrogenase family. Zn(2+) serves as cofactor.

It functions in the pathway secondary metabolite biosynthesis. Functionally, histidinol dehydrogenase homolog; part of the gene cluster that mediates the biosynthesis of oryzines, natural products with an unusual maleidride backbone. The two subunits of the fungal fatty acid synthase oryfasA and oryfasB probably form octenoic acid. This fatty acid is most likely activated by the acyl-CoA ligase oryP to give octenyl-CoA before the citrate synthase-like protein oryE catalyzes condensation with oxaloacetate to form tricarboxylic acid. The next steps of the pathways are conjectural, but a favorite possible route has been proposed, beginning with decarboxylation and concomitant dehydration by the decarboxylase oryM, followed by tautomerization, which may lead to the production of a diene intermediate. Reduction of this diene intermediate could give the known metabolite piliformic acid. On the pathway to oryzine B and oryzine A, however, hydroxylation of the diene by the alpha-ketoglutarate-dependent dioxygenase oryG and lactonisation by the lactonohydrolases oryH or oryL could give oryzine B directly. Finally, enoyl reduction by the dehydrogenase oryD would then convert oryzine B into oryzine A. In Aspergillus oryzae (strain ATCC 42149 / RIB 40) (Yellow koji mold), this protein is Histidinol dehydrogenase homolog oryD.